A 632-amino-acid chain; its full sequence is 1-deoxy-D-xylulose-5-phosphate synthase (632 aa).

Thiamine diphosphate-binding positions include His74 and 115 to 117; that span reads AHS. Asp146 is a Mg(2+) binding site. Thiamine diphosphate contacts are provided by residues 147–148, Asn176, Tyr283, and Glu365; that span reads GA. Asn176 contributes to the Mg(2+) binding site.

Belongs to the transketolase family. DXPS subfamily. Homodimer. The cofactor is Mg(2+). Requires thiamine diphosphate as cofactor.

It catalyses the reaction D-glyceraldehyde 3-phosphate + pyruvate + H(+) = 1-deoxy-D-xylulose 5-phosphate + CO2. Its pathway is metabolic intermediate biosynthesis; 1-deoxy-D-xylulose 5-phosphate biosynthesis; 1-deoxy-D-xylulose 5-phosphate from D-glyceraldehyde 3-phosphate and pyruvate: step 1/1. Catalyzes the acyloin condensation reaction between C atoms 2 and 3 of pyruvate and glyceraldehyde 3-phosphate to yield 1-deoxy-D-xylulose-5-phosphate (DXP). This Paraburkholderia phymatum (strain DSM 17167 / CIP 108236 / LMG 21445 / STM815) (Burkholderia phymatum) protein is 1-deoxy-D-xylulose-5-phosphate synthase.